The chain runs to 243 residues: Fibroblast growth factor 12 (243 aa).

Disordered regions lie at residues 1-39 (MAAA…DGRS) and 216-243 (IGEK…QDST). The Bipartite nuclear localization signal signature appears at 11 to 38 (RQKRQARESNSDRVSASKRRSSPSKDGR).

The protein belongs to the heparin-binding growth factors family. As to quaternary structure, interacts with the C-terminal region of SCN9A. In terms of tissue distribution, brain, eye and testis; highly expressed in embryonic retina, olfactory epithelium, olfactory bulb, and in a segmental pattern of the body wall; in adult olfactory bulb, less in cerebellum, deep cerebellar nuclei, cortex and multiple midbrain structures.

It localises to the nucleus. Its function is as follows. Involved in nervous system development and function. Involved in the positive regulation of voltage-gated sodium channel activity. Promotes neuronal excitability by elevating the voltage dependence of neuronal sodium channel SCN8A fast inactivation. The chain is Fibroblast growth factor 12 (FGF12) from Homo sapiens (Human).